A 286-amino-acid chain; its full sequence is Energy-coupling factor transporter ATP-binding protein EcfA2 (286 aa).

The ABC transporter domain maps to 3 to 246 (IRFDNVSYTY…KKKLADWHIG (244 aa)). Position 40–47 (40–47 (GQTGSGKS)) interacts with ATP.

The protein belongs to the ABC transporter superfamily. Energy-coupling factor EcfA family. In terms of assembly, forms a stable energy-coupling factor (ECF) transporter complex composed of 2 membrane-embedded substrate-binding proteins (S component), 2 ATP-binding proteins (A component) and 2 transmembrane proteins (T component).

The protein resides in the cell membrane. Its function is as follows. ATP-binding (A) component of a common energy-coupling factor (ECF) ABC-transporter complex. Unlike classic ABC transporters this ECF transporter provides the energy necessary to transport a number of different substrates. The protein is Energy-coupling factor transporter ATP-binding protein EcfA2 of Staphylococcus aureus (strain USA300).